The primary structure comprises 394 residues: Acetyl-CoA acetyltransferase (394 aa).

Residue Cys88 is the Acyl-thioester intermediate of the active site. Active-site proton acceptor residues include His349 and Cys379.

The protein belongs to the thiolase-like superfamily. Thiolase family.

It is found in the cytoplasm. The catalysed reaction is 2 acetyl-CoA = acetoacetyl-CoA + CoA. Its pathway is metabolic intermediate biosynthesis; (R)-mevalonate biosynthesis; (R)-mevalonate from acetyl-CoA: step 1/3. In Escherichia coli (strain K12), this protein is Acetyl-CoA acetyltransferase (atoB).